The primary structure comprises 430 residues: Glutamate-1-semialdehyde 2,1-aminomutase (430 aa).

An N6-(pyridoxal phosphate)lysine modification is found at lysine 266.

The protein belongs to the class-III pyridoxal-phosphate-dependent aminotransferase family. HemL subfamily. Homodimer. It depends on pyridoxal 5'-phosphate as a cofactor.

It localises to the cytoplasm. It carries out the reaction (S)-4-amino-5-oxopentanoate = 5-aminolevulinate. The protein operates within porphyrin-containing compound metabolism; protoporphyrin-IX biosynthesis; 5-aminolevulinate from L-glutamyl-tRNA(Glu): step 2/2. In Acidithiobacillus ferrooxidans (strain ATCC 23270 / DSM 14882 / CIP 104768 / NCIMB 8455) (Ferrobacillus ferrooxidans (strain ATCC 23270)), this protein is Glutamate-1-semialdehyde 2,1-aminomutase.